Reading from the N-terminus, the 247-residue chain is UDP-2,3-diacylglucosamine hydrolase (247 aa).

Positions 8, 10, 41, 79, and 114 each coordinate Mn(2+). A substrate-binding site is contributed by Asn-79 to Arg-80. The substrate site is built by Asp-122, Ser-160, Asp-171, Gln-174, and His-202. Mn(2+) contacts are provided by His-202 and His-204.

It belongs to the LpxH family. The cofactor is Mn(2+).

Its subcellular location is the cell inner membrane. The enzyme catalyses UDP-2-N,3-O-bis[(3R)-3-hydroxytetradecanoyl]-alpha-D-glucosamine + H2O = 2-N,3-O-bis[(3R)-3-hydroxytetradecanoyl]-alpha-D-glucosaminyl 1-phosphate + UMP + 2 H(+). Its pathway is glycolipid biosynthesis; lipid IV(A) biosynthesis; lipid IV(A) from (3R)-3-hydroxytetradecanoyl-[acyl-carrier-protein] and UDP-N-acetyl-alpha-D-glucosamine: step 4/6. Its function is as follows. Hydrolyzes the pyrophosphate bond of UDP-2,3-diacylglucosamine to yield 2,3-diacylglucosamine 1-phosphate (lipid X) and UMP by catalyzing the attack of water at the alpha-P atom. Involved in the biosynthesis of lipid A, a phosphorylated glycolipid that anchors the lipopolysaccharide to the outer membrane of the cell. In Xanthomonas campestris pv. campestris (strain 8004), this protein is UDP-2,3-diacylglucosamine hydrolase.